The primary structure comprises 2202 residues: Nonribosomal peptide synthetase 5 (2202 aa).

The interval 58 to 443 is adenylation 1; it reads TYAQLDALSD…LLSYDKVDSA (386 aa). Positions 517 to 593 constitute a Carrier 1 domain; the sequence is ERGLGAVESV…NIAAAVVELS (77 aa). Ser-554 bears the O-(pantetheine 4'-phosphoryl)serine mark. The segment at 625–918 is condensation 1; the sequence is IAPMTDMQTR…INTLPLAINT (294 aa). The interval 1105 to 1482 is adenylation 2; the sequence is TYREFGRMTE…EVQSTISKLA (378 aa). The Carrier 2 domain occupies 1563 to 1643; that stretch reads DLETDTQRVL…DLSLAIDELV (81 aa). Position 1602 is an O-(pantetheine 4'-phosphoryl)serine (Ser-1602). The condensation 2 stretch occupies residues 1664–1952; that stretch reads GQLPLSYLEK…FLDRLLLRIQ (289 aa). Positions 2103 to 2129 are disordered; sequence PVGLTPSHEGSAELTNGTNKTDSTTGQ. Polar residues predominate over residues 2115–2129; it reads ELTNGTNKTDSTTGQ. The Carrier 3 domain maps to 2130-2202; sequence QELENNLTDV…LELATCAVII (73 aa). The residue at position 2164 (Ser-2164) is an O-(pantetheine 4'-phosphoryl)serine.

This sequence belongs to the NRP synthetase family.

Functionally, nonribosomal peptide synthesis (NRPS) is a key mechanism responsible for the biosynthesis of bioactive metabolites which are potentially contributing to organismal virulence. The polypeptide is Nonribosomal peptide synthetase 5 (NRPS5) (Aspergillus fumigatus (strain ATCC MYA-4609 / CBS 101355 / FGSC A1100 / Af293) (Neosartorya fumigata)).